Consider the following 96-residue polypeptide: Phosphoribosyl-ATP pyrophosphatase (96 aa).

It belongs to the PRA-PH family.

The protein resides in the cytoplasm. It catalyses the reaction 1-(5-phospho-beta-D-ribosyl)-ATP + H2O = 1-(5-phospho-beta-D-ribosyl)-5'-AMP + diphosphate + H(+). It functions in the pathway amino-acid biosynthesis; L-histidine biosynthesis; L-histidine from 5-phospho-alpha-D-ribose 1-diphosphate: step 2/9. This is Phosphoribosyl-ATP pyrophosphatase from Methanococcus vannielii (strain ATCC 35089 / DSM 1224 / JCM 13029 / OCM 148 / SB).